Reading from the N-terminus, the 288-residue chain is Energy-coupling factor transporter ATP-binding protein EcfA2 (288 aa).

Positions 3-245 (IIVKNLTHIY…NASKLKDIGL (243 aa)) constitute an ABC transporter domain. 40-47 (GHTGSGKS) contacts ATP.

It belongs to the ABC transporter superfamily. Energy-coupling factor EcfA family. In terms of assembly, forms a stable energy-coupling factor (ECF) transporter complex composed of 2 membrane-embedded substrate-binding proteins (S component), 2 ATP-binding proteins (A component) and 2 transmembrane proteins (T component).

The protein resides in the cell membrane. Its function is as follows. ATP-binding (A) component of a common energy-coupling factor (ECF) ABC-transporter complex. Unlike classic ABC transporters this ECF transporter provides the energy necessary to transport a number of different substrates. This Clostridioides difficile (strain 630) (Peptoclostridium difficile) protein is Energy-coupling factor transporter ATP-binding protein EcfA2.